We begin with the raw amino-acid sequence, 716 residues long: DEAD-box ATP-dependent RNA helicase 31 (716 aa).

The disordered stretch occupies residues 99–188 (GILKSDDEDE…LRLEDESSDE (90 aa)). The span at 110-121 (DRSRGRNQEKRG) shows a compositional bias: basic and acidic residues. The segment covering 144–153 (SRIQGKSSEA) has biased composition (polar residues). Over residues 155-188 (FRGRKETSFSRDREDEKGLRKREDLRLEDESSDE) the composition is skewed to basic and acidic residues. Residues 248 to 276 (TRFDHYPLSPLSLKAIKDAGYETMTVVQE) carry the Q motif motif. The 184-residue stretch at 279 to 462 (LPIILKGKDV…LVALRRDHEF (184 aa)) folds into the Helicase ATP-binding domain. 292–299 (AKTGTGKT) is an ATP binding site. Positions 410 to 413 (DEAD) match the DEAD box motif. Residues 497–643 (LREHIMGNVD…IDPETVKKVQ (147 aa)) enclose the Helicase C-terminal domain.

This sequence belongs to the DEAD box helicase family.

It carries out the reaction ATP + H2O = ADP + phosphate + H(+). The chain is DEAD-box ATP-dependent RNA helicase 31 (RH31) from Arabidopsis thaliana (Mouse-ear cress).